Here is a 211-residue protein sequence, read N- to C-terminus: Arginine exporter protein ArgO (211 aa).

The next 6 helical transmembrane spans lie at 1 to 21 (MFTY…PLGP), 37 to 57 (LMIA…GIFG), 68 to 88 (LLAI…FGAL), 111 to 131 (IIIT…DTFV), 147 to 167 (WFAL…ALLA), and 182 to 202 (IINI…AKEG).

Belongs to the LysE/ArgO transporter (TC 2.A.75) family.

The protein localises to the cell inner membrane. The enzyme catalyses L-arginine(in) = L-arginine(out). Functionally, involved in the export of arginine. Important to control the intracellular level of arginine and the correct balance between arginine and lysine. In Klebsiella pneumoniae (strain 342), this protein is Arginine exporter protein ArgO.